Here is a 508-residue protein sequence, read N- to C-terminus: TATA box-binding protein-like 1 (508 aa).

Disordered regions lie at residues 145-190 (QISY…QMHH), 236-262 (EPIP…PMPD), and 456-479 (QKKR…FDDS).

The protein belongs to the TBP family.

It localises to the nucleus. Functionally, may be a general transcription factor. Plays an essential role for RNA polymerase II/ama-1 transcription in early embryos whereby it activates a subset of RNA polymerase II promoters and facilitates the reestablishment of transcription after mitosis. This is TATA box-binding protein-like 1 from Caenorhabditis elegans.